The following is a 557-amino-acid chain: DNA ligase (557 aa).

E251 lines the ATP pocket. The active-site N6-AMP-lysine intermediate is K253. Residues R258, R273, E303, F342, R418, and K424 each coordinate ATP.

Belongs to the ATP-dependent DNA ligase family. Requires Mg(2+) as cofactor.

It catalyses the reaction ATP + (deoxyribonucleotide)n-3'-hydroxyl + 5'-phospho-(deoxyribonucleotide)m = (deoxyribonucleotide)n+m + AMP + diphosphate.. DNA ligase that seals nicks in double-stranded DNA during DNA replication, DNA recombination and DNA repair. This Methanosphaera stadtmanae (strain ATCC 43021 / DSM 3091 / JCM 11832 / MCB-3) protein is DNA ligase.